A 120-amino-acid chain; its full sequence is Chaperonin GroEL (120 aa).

23 to 27 (DGTTT) provides a ligand contact to ATP.

Belongs to the chaperonin (HSP60) family. In terms of assembly, forms a cylinder of 14 subunits composed of two heptameric rings stacked back-to-back. Interacts with the co-chaperonin GroES.

It localises to the cytoplasm. It carries out the reaction ATP + H2O + a folded polypeptide = ADP + phosphate + an unfolded polypeptide.. Together with its co-chaperonin GroES, plays an essential role in assisting protein folding. The GroEL-GroES system forms a nano-cage that allows encapsulation of the non-native substrate proteins and provides a physical environment optimized to promote and accelerate protein folding. The chain is Chaperonin GroEL from Mycolicibacterium pulveris (Mycobacterium pulveris).